The primary structure comprises 204 residues: Guanylate kinase (204 aa).

In terms of domain architecture, Guanylate kinase-like spans 1-182 (MLYIISAPSG…ALSDLNTIIC (182 aa)). 7–14 (APSGTGKS) contributes to the ATP binding site.

This sequence belongs to the guanylate kinase family.

It is found in the cytoplasm. It catalyses the reaction GMP + ATP = GDP + ADP. Functionally, essential for recycling GMP and indirectly, cGMP. This is Guanylate kinase from Baumannia cicadellinicola subsp. Homalodisca coagulata.